The primary structure comprises 262 residues: MTLLAIGIEYQGTAYCGWQHQKHCDSVQQQLEKALSYIADEPIGLNCAGRTDTGVHAIGQIAHFETNASRPDKAWIQGVNTQLPNDIRVTWVKPMPEDFHARFSAVARQYRYVIFNRPVHSAILANRVTWENRPLDVKKMHAAAQDLLGENDFSSFRAAGCQASHANRNVQYLQVSRQGNFVFVDIQANAFLHHMVRNIVGTLLEVGRLDKPVEWVSELLKKQDRTQAGMTAPAAGLYFVNALYPESFELPRVVLDELLWQA.

Aspartate 52 functions as the Nucleophile in the catalytic mechanism. Tyrosine 110 is a substrate binding site.

This sequence belongs to the tRNA pseudouridine synthase TruA family. As to quaternary structure, homodimer.

It carries out the reaction uridine(38/39/40) in tRNA = pseudouridine(38/39/40) in tRNA. Formation of pseudouridine at positions 38, 39 and 40 in the anticodon stem and loop of transfer RNAs. This chain is tRNA pseudouridine synthase A, found in Hydrogenovibrio crunogenus (strain DSM 25203 / XCL-2) (Thiomicrospira crunogena).